The following is a 788-amino-acid chain: Pre-rRNA-processing protein TSR1 homolog (788 aa).

Residues 1–40 (MSTTGHRAGVFKKPAKPHKSWKGKRTKGEITTENRGREGV) are disordered. Basic residues predominate over residues 9–25 (GVFKKPAKPHKSWKGKR). Positions 26–40 (TKGEITTENRGREGV) are enriched in basic and acidic residues. The region spanning 83–243 (APCLVTILSL…LRTLNETKKK (161 aa)) is the Bms1-type G domain. Positions 354–433 (LEEADKEMRR…ASEMMFHDEI (80 aa)) are disordered. Residues 378-412 (DDSEDDEDEEDEDEDMDDEEEDKDLEEDDEEEDTP) are compositionally biased toward acidic residues.

The protein belongs to the TRAFAC class translation factor GTPase superfamily. Bms1-like GTPase family. TSR1 subfamily.

Its subcellular location is the nucleus. The protein localises to the nucleolus. Required during maturation of the 40S ribosomal subunit in the nucleolus. The chain is Pre-rRNA-processing protein TSR1 homolog from Caenorhabditis briggsae.